A 349-amino-acid chain; its full sequence is 4-hydroxy-3-methylbut-2-en-1-yl diphosphate synthase (flavodoxin) (349 aa).

Positions 264, 267, 299, and 306 each coordinate [4Fe-4S] cluster.

This sequence belongs to the IspG family. Requires [4Fe-4S] cluster as cofactor.

It carries out the reaction (2E)-4-hydroxy-3-methylbut-2-enyl diphosphate + oxidized [flavodoxin] + H2O + 2 H(+) = 2-C-methyl-D-erythritol 2,4-cyclic diphosphate + reduced [flavodoxin]. The protein operates within isoprenoid biosynthesis; isopentenyl diphosphate biosynthesis via DXP pathway; isopentenyl diphosphate from 1-deoxy-D-xylulose 5-phosphate: step 5/6. In terms of biological role, converts 2C-methyl-D-erythritol 2,4-cyclodiphosphate (ME-2,4cPP) into 1-hydroxy-2-methyl-2-(E)-butenyl 4-diphosphate. The chain is 4-hydroxy-3-methylbut-2-en-1-yl diphosphate synthase (flavodoxin) from Clostridium perfringens (strain 13 / Type A).